The sequence spans 69 residues: U2-agatoxin-Ao1z (69 aa).

The first 20 residues, 1-20 (MRAIISLLLISAMVFSMIEA), serve as a signal peptide directing secretion. The propeptide occupies 21-34 (VPVEEGLQLFEGER). Intrachain disulfides connect Cys37–Cys53, Cys44–Cys58, and Cys52–Cys68.

It belongs to the neurotoxin 01 (U2-agtx) family. In terms of tissue distribution, expressed by the venom gland.

The protein resides in the secreted. Insect active toxin causing rapid but reversible paralysis in crickets. No activity shown in mammals. Does not show effect on mammalian voltage-gated calcium channels. In Agelena orientalis (Funnel-web spider), this protein is U2-agatoxin-Ao1z.